We begin with the raw amino-acid sequence, 163 residues long: Nucleotide-binding protein MT0592 (163 aa).

Belongs to the YajQ family.

Its function is as follows. Nucleotide-binding protein. This Mycobacterium tuberculosis (strain CDC 1551 / Oshkosh) protein is Nucleotide-binding protein MT0592.